We begin with the raw amino-acid sequence, 128 residues long: Gastrotropin (128 aa).

Ala-2 is modified (N-acetylalanine).

Belongs to the calycin superfamily. Fatty-acid binding protein (FABP) family. As to expression, expressed in ileum.

Its subcellular location is the cytoplasm. It is found in the membrane. Functionally, binds to bile acids and is involved in enterohepatic bile acid metabolism. Required for efficient apical to basolateral transport of conjugated bile acids in ileal enterocytes. Stimulates gastric acid and pepsinogen secretion. The polypeptide is Gastrotropin (FABP6) (Oryctolagus cuniculus (Rabbit)).